The following is a 640-amino-acid chain: Endoglucanase 2 (640 aa).

The signal sequence occupies residues 1 to 34; it reads MARGGGAAGVSMAHHLGIALVVLVFAAMAQVARG. The Nucleophile role is filled by Asp-93. Catalysis depends on residues His-428, Asp-480, and Glu-489. A propeptide spans 512 to 640 (removed in mature form); it reads RARGRLGQSL…DVWVTGYKLV (129 aa). An N-linked (GlcNAc...) asparagine glycan is attached at Asn-528.

Belongs to the glycosyl hydrolase 9 (cellulase E) family. In terms of tissue distribution, expressed in roots and flowers.

It localises to the secreted. The enzyme catalyses Endohydrolysis of (1-&gt;4)-beta-D-glucosidic linkages in cellulose, lichenin and cereal beta-D-glucans.. Functionally, hydrolyzes 1,4-beta-glycosyl linkages of 1,4-beta-glucans and 1,3-1,4-beta-glucans. Possesses broad substrate specificity for hemicelluloses of type II cell walls. Substrate preference is carboxymethyl-cellulose &gt; 1,3-1,4-beta-glucan &gt; lichenan &gt; arabinoxylan &gt; phospho-swollen cellulose &gt; xylan &gt; glucomannan. May participate in lateral root development. The protein is Endoglucanase 2 (GLU5) of Oryza sativa subsp. japonica (Rice).